Consider the following 137-residue polypeptide: DNA-binding protein H-NS (137 aa).

The stretch at 13–65 (TLRAQARECTLETLEEMLEKLEVVVNERREEESAAAAEVEERTRKLQQYREML) forms a coiled coil. Residues 112–117 (QGRTPA) mediate DNA binding.

It belongs to the histone-like protein H-NS family. As to quaternary structure, homodimer that oligomerizes on DNA into higher-order complexes that form bridges between disparate regions of DNA compacting it. Interacts with Hha, YdgT and StpA.

It localises to the cytoplasm. The protein resides in the nucleoid. A DNA-binding protein implicated in transcriptional repression and chromosome organization and compaction. Binds AT-rich DNA, repressing its transcription; about 754/4438 tested genes (15%) bind to H-NS, 70% of these are AT-rich and correspond to horizontally transferred geness (HTG), thus playing a central role in silencing foreign genes. This offers the selective advantage of silencing foreign DNA. Binds nucleation sites in AT-rich DNA and bridges them, forming higher-order nucleoprotein complexes and condensing the chromosome. A subset of genes are repressed by H-NS in association with Hha and/or YdgT. The polypeptide is DNA-binding protein H-NS (hns) (Salmonella typhimurium (strain 14028s / SGSC 2262)).